The primary structure comprises 106 residues: 3-phenylpropionate/cinnamic acid dioxygenase ferredoxin subunit (106 aa).

Residues 4–99 (IYACPVADVP…VHVEGGDIFI (96 aa)) enclose the Rieske domain. Positions 42, 44, 62, and 65 each coordinate [2Fe-2S] cluster.

Belongs to the bacterial ring-hydroxylating dioxygenase ferredoxin component family. As to quaternary structure, this dioxygenase system consists of four proteins: the two subunits of the hydroxylase component (HcaE and HcaF), a ferredoxin (HcaC) and a ferredoxin reductase (HcaD). The cofactor is [2Fe-2S] cluster.

It participates in aromatic compound metabolism; 3-phenylpropanoate degradation. Part of the multicomponent 3-phenylpropionate dioxygenase, that converts 3-phenylpropionic acid (PP) and cinnamic acid (CI) into 3-phenylpropionate-dihydrodiol (PP-dihydrodiol) and cinnamic acid-dihydrodiol (CI-dihydrodiol), respectively. This protein seems to be a 2Fe-2S ferredoxin. This is 3-phenylpropionate/cinnamic acid dioxygenase ferredoxin subunit from Escherichia coli O139:H28 (strain E24377A / ETEC).